Consider the following 445-residue polypeptide: Polyadenylate-binding protein RBP47A (445 aa).

Over residues 1 to 12 (MQTPNNNGSTDS) the composition is skewed to polar residues. Disordered stretches follow at residues 1–45 (MQTP…WQQQ) and 93–117 (AAYQQQQQQHHQSQQQPRGGSGGDD). The segment covering 22–35 (TPPPPLQQSTPPPQ) has biased composition (pro residues). Low complexity-rich tracts occupy residues 36-45 (QQQQQQWQQQ) and 93-108 (AAYQQQQQQHHQSQQQ). 3 RRM domains span residues 119 to 199 (KTLW…WASF), 213 to 292 (LSIF…IATP), and 327 to 399 (STIF…WGRS).

It belongs to the polyadenylate-binding RBP47 family. Interacts with the poly(A) tail of mRNA in nucleus. In terms of tissue distribution, expressed in leaves, stems, flowers, and seedlings.

Its subcellular location is the nucleus. The protein resides in the cytoplasmic granule. Functionally, heterogeneous nuclear ribonucleoprotein (hnRNP)-protein binding the poly(A) tail of mRNA and probably involved in some steps of pre-mRNA maturation. The chain is Polyadenylate-binding protein RBP47A (RBP47A) from Arabidopsis thaliana (Mouse-ear cress).